The sequence spans 102 residues: uncharacterized protein (102 aa).

Residues 79–102 (AELLHPSPAPMPPATHGRSAAPCS) are disordered.

This is an uncharacterized protein from Homo sapiens (Human).